A 241-amino-acid polypeptide reads, in one-letter code: Lipoprotein MxiJ (241 aa).

Residues 1 to 17 form the signal peptide; the sequence is MIRYKGFILFLLLMLIG. Cys18 carries the N-palmitoyl cysteine lipid modification. Cys18 carries S-diacylglycerol cysteine lipidation.

This sequence belongs to the YscJ lipoprotein family.

The protein localises to the cell outer membrane. In terms of biological role, involved in the secretion of the Ipa antigens. This chain is Lipoprotein MxiJ (mxiJ), found in Shigella sonnei.